A 63-amino-acid chain; its full sequence is Large ribosomal subunit protein uL29 (63 aa).

This sequence belongs to the universal ribosomal protein uL29 family.

The chain is Large ribosomal subunit protein uL29 from Shewanella oneidensis (strain ATCC 700550 / JCM 31522 / CIP 106686 / LMG 19005 / NCIMB 14063 / MR-1).